The sequence spans 227 residues: Cytochrome c oxidase subunit 2 (227 aa).

The Mitochondrial intermembrane segment spans residues 1 to 14 (MAYPFELGFQDATS). A helical transmembrane segment spans residues 15–45 (PIMEELLHFHDHTLMIVFLISSLVLYIISLM). At 46 to 59 (LTTKLTHTSTMDAQ) the chain is on the mitochondrial matrix side. The helical transmembrane segment at 60-87 (EVETIWTILPAIILILIALPSLRILYMM) threads the bilayer. At 88–227 (DEINDPSLTV…HFENWSSSML (140 aa)) the chain is on the mitochondrial intermembrane side. 6 residues coordinate Cu cation: His-161, Cys-196, Glu-198, Cys-200, His-204, and Met-207. Glu-198 contributes to the Mg(2+) binding site.

The protein belongs to the cytochrome c oxidase subunit 2 family. As to quaternary structure, component of the cytochrome c oxidase (complex IV, CIV), a multisubunit enzyme composed of 14 subunits. The complex is composed of a catalytic core of 3 subunits MT-CO1, MT-CO2 and MT-CO3, encoded in the mitochondrial DNA, and 11 supernumerary subunits COX4I, COX5A, COX5B, COX6A, COX6B, COX6C, COX7A, COX7B, COX7C, COX8 and NDUFA4, which are encoded in the nuclear genome. The complex exists as a monomer or a dimer and forms supercomplexes (SCs) in the inner mitochondrial membrane with NADH-ubiquinone oxidoreductase (complex I, CI) and ubiquinol-cytochrome c oxidoreductase (cytochrome b-c1 complex, complex III, CIII), resulting in different assemblies (supercomplex SCI(1)III(2)IV(1) and megacomplex MCI(2)III(2)IV(2)). Found in a complex with TMEM177, COA6, COX18, COX20, SCO1 and SCO2. Interacts with TMEM177 in a COX20-dependent manner. Interacts with COX20. Interacts with COX16. Requires Cu cation as cofactor.

It localises to the mitochondrion inner membrane. The enzyme catalyses 4 Fe(II)-[cytochrome c] + O2 + 8 H(+)(in) = 4 Fe(III)-[cytochrome c] + 2 H2O + 4 H(+)(out). Component of the cytochrome c oxidase, the last enzyme in the mitochondrial electron transport chain which drives oxidative phosphorylation. The respiratory chain contains 3 multisubunit complexes succinate dehydrogenase (complex II, CII), ubiquinol-cytochrome c oxidoreductase (cytochrome b-c1 complex, complex III, CIII) and cytochrome c oxidase (complex IV, CIV), that cooperate to transfer electrons derived from NADH and succinate to molecular oxygen, creating an electrochemical gradient over the inner membrane that drives transmembrane transport and the ATP synthase. Cytochrome c oxidase is the component of the respiratory chain that catalyzes the reduction of oxygen to water. Electrons originating from reduced cytochrome c in the intermembrane space (IMS) are transferred via the dinuclear copper A center (CU(A)) of subunit 2 and heme A of subunit 1 to the active site in subunit 1, a binuclear center (BNC) formed by heme A3 and copper B (CU(B)). The BNC reduces molecular oxygen to 2 water molecules using 4 electrons from cytochrome c in the IMS and 4 protons from the mitochondrial matrix. The chain is Cytochrome c oxidase subunit 2 (MT-CO2) from Neotamias bulleri (Buller's chipmunk).